The sequence spans 231 residues: Enolase-phosphatase E1 (231 aa).

It belongs to the HAD-like hydrolase superfamily. MasA/MtnC family. In terms of assembly, monomer. The cofactor is Mg(2+).

It catalyses the reaction 5-methylsulfanyl-2,3-dioxopentyl phosphate + H2O = 1,2-dihydroxy-5-(methylsulfanyl)pent-1-en-3-one + phosphate. It functions in the pathway amino-acid biosynthesis; L-methionine biosynthesis via salvage pathway; L-methionine from S-methyl-5-thio-alpha-D-ribose 1-phosphate: step 3/6. Its pathway is amino-acid biosynthesis; L-methionine biosynthesis via salvage pathway; L-methionine from S-methyl-5-thio-alpha-D-ribose 1-phosphate: step 4/6. Functionally, bifunctional enzyme that catalyzes the enolization of 2,3-diketo-5-methylthiopentyl-1-phosphate (DK-MTP-1-P) into the intermediate 2-hydroxy-3-keto-5-methylthiopentenyl-1-phosphate (HK-MTPenyl-1-P), which is then dephosphorylated to form the acireductone 1,2-dihydroxy-3-keto-5-methylthiopentene (DHK-MTPene). This is Enolase-phosphatase E1 from Stenotrophomonas maltophilia (strain R551-3).